A 223-amino-acid polypeptide reads, in one-letter code: Protein Wnt-1 (223 aa).

3 disulfide bridges follow: Cys7–Cys24, Cys72–Cys86, and Cys74–Cys81. Ser78 carries the O-palmitoleoyl serine; by PORCN lipid modification. The disordered stretch occupies residues 110-135 (VTMRNDGSPSDRETESSFVPYNPSHK). Residues 125–135 (SSFVPYNPSHK) are compositionally biased toward polar residues. 6 cysteine pairs are disulfide-bonded: Cys152–Cys183, Cys168–Cys178, Cys182–Cys222, Cys198–Cys213, Cys200–Cys210, and Cys205–Cys206. N-linked (GlcNAc...) asparagine glycosylation is present at Asn169.

This sequence belongs to the Wnt family. Palmitoleoylation is required for efficient binding to frizzled receptors. Palmitoleoylation is necessary for proper trafficking to cell surface. Depalmitoleoylated by NOTUM, leading to inhibit Wnt signaling pathway.

The protein resides in the secreted. Its subcellular location is the extracellular space. It localises to the extracellular matrix. Functionally, ligand for members of the frizzled family of seven transmembrane receptors. Probable developmental protein. This chain is Protein Wnt-1 (WNT-1), found in Strongylocentrotus purpuratus (Purple sea urchin).